The chain runs to 289 residues: Rhodopsin (289 aa).

Residues 1-7 (YLVNPAA) lie on the Extracellular side of the membrane. A helical transmembrane segment spans residues 8-32 (YAALGAYMFLLILIGFPVNFLTLYV). The Cytoplasmic segment spans residues 33-44 (TIEHKKLRTPLN). The chain crosses the membrane as a helical span at residues 45–67 (YILLNLAVANLFMVLGGFTTTMY). Over 68–81 (TSMHGYFVLGRLGC) the chain is Extracellular. Cysteine 81 and cysteine 158 are oxidised to a cystine. The helical transmembrane segment at 82–104 (NLEGFFATMGGEIALWSLVVLAI) threads the bilayer. The 'Ionic lock' involved in activated form stabilization signature appears at 105–107 (ERW). Residues 105 to 123 (ERWIVVCKPISNFRFTEDH) are Cytoplasmic-facing. The chain crosses the membrane as a helical span at residues 124-144 (AIMGLAFTWVMALSCAVPPLV). Residues 145–173 (GWSRYIPEGMQCSCGVDYYTRAEGFNNES) lie on the Extracellular side of the membrane. Residue asparagine 171 is glycosylated (N-linked (GlcNAc...) asparagine). A helical membrane pass occupies residues 174–195 (FVIYMFIVHFLTPLIIISFCYG). Residues 196–223 (RLLCAVKEAAAAQQESETTQRAEREVSR) lie on the Cytoplasmic side of the membrane. A helical membrane pass occupies residues 224-245 (MVVMMVISFLMCWLPYASVAWY). Residues 246-257 (IFCNQGSEFGPI) lie on the Extracellular side of the membrane. The chain crosses the membrane as a helical span at residues 258 to 279 (FMTLPAFFAKSSAIYNPLIYIC). An N6-(retinylidene)lysine modification is found at lysine 267. Residues 280–289 (MNKQFRHCMI) lie on the Cytoplasmic side of the membrane.

This sequence belongs to the G-protein coupled receptor 1 family. Opsin subfamily. Phosphorylated on some or all of the serine and threonine residues present in the C-terminal region. Post-translationally, contains one covalently linked retinal chromophore.

The protein localises to the membrane. The protein resides in the cell projection. It localises to the cilium. Its subcellular location is the photoreceptor outer segment. Functionally, photoreceptor required for image-forming vision at low light intensity. While most salt water fish species use retinal as chromophore, most freshwater fish use 3-dehydroretinal, or a mixture of retinal and 3-dehydroretinal. Light-induced isomerization of 11-cis to all-trans retinal triggers a conformational change that activates signaling via G-proteins. Subsequent receptor phosphorylation mediates displacement of the bound G-protein alpha subunit by arrestin and terminates signaling. In Cottocomephorus inermis (Longfin Baikal sculpin), this protein is Rhodopsin (rho).